The chain runs to 195 residues: Putative NADH dehydrogenase/NAD(P)H nitroreductase RSc1004 (195 aa).

Belongs to the nitroreductase family. HadB/RutE subfamily. The cofactor is FMN.

In Ralstonia nicotianae (strain ATCC BAA-1114 / GMI1000) (Ralstonia solanacearum), this protein is Putative NADH dehydrogenase/NAD(P)H nitroreductase RSc1004.